A 92-amino-acid chain; its full sequence is Protein 10 (92 aa).

The EF-hand domain occupies F18–H29.

The protein belongs to the calbindin family. Brain.

The protein is Protein 10 of Cavia porcellus (Guinea pig).